Reading from the N-terminus, the 157-residue chain is Nascent polypeptide-associated complex subunit beta-1 (157 aa).

Disordered regions lie at residues 19-42 (KVGGTRRKLNKKAGSSAGANKDDT) and 126-157 (EKHEAKAPADAEKKDEAIPELVEGQTFDADVE). The region spanning 38 to 103 (NKDDTKLQSQ…PQEKNLQDLF (66 aa)) is the NAC-A/B domain. Basic and acidic residues predominate over residues 126–142 (EKHEAKAPADAEKKDEA). A Phosphothreonine modification is found at threonine 151.

It belongs to the NAC-beta family. In terms of assembly, part of the nascent polypeptide-associated complex (NAC), consisting of EGD2 and either EGD1 or BTT1. NAC associates with ribosomes via EGD1 or BTT1, and with the CCR4-NOT complex.

Its subcellular location is the cytoplasm. It localises to the nucleus. Component of the nascent polypeptide-associated complex (NAC), a dynamic component of the ribosomal exit tunnel, protecting the emerging polypeptides from interaction with other cytoplasmic proteins to ensure appropriate nascent protein targeting. The NAC complex also promotes mitochondrial protein import by enhancing productive ribosome interactions with the outer mitochondrial membrane and blocks the inappropriate interaction of ribosomes translating non-secretory nascent polypeptides with translocation sites in the membrane of the endoplasmic reticulum. EGD1 may act as a transcription factor that exert a negative effect on the expression of several genes that are transcribed by RNA polymerase II. The chain is Nascent polypeptide-associated complex subunit beta-1 (EGD1) from Saccharomyces cerevisiae (strain YJM789) (Baker's yeast).